A 201-amino-acid chain; its full sequence is 3-isopropylmalate dehydratase small subunit (201 aa).

It belongs to the LeuD family. LeuD type 1 subfamily. In terms of assembly, heterodimer of LeuC and LeuD.

The catalysed reaction is (2R,3S)-3-isopropylmalate = (2S)-2-isopropylmalate. Its pathway is amino-acid biosynthesis; L-leucine biosynthesis; L-leucine from 3-methyl-2-oxobutanoate: step 2/4. Functionally, catalyzes the isomerization between 2-isopropylmalate and 3-isopropylmalate, via the formation of 2-isopropylmaleate. This chain is 3-isopropylmalate dehydratase small subunit, found in Shigella dysenteriae serotype 1 (strain Sd197).